A 432-amino-acid polypeptide reads, in one-letter code: MKKFLITLLLGVFMGLQASALTHQEINQAKVPVIYEENHLLPMGFIHLAFRGGGSLSDKNQLGLAKLFAQVLNEGTKELGAVGFAQLLEQKAISLNVDTSTEDLQITLEFLKEYEDEAITRLKELLKSPNFTQNALEKVKTQMLAALLQKESDFDYLAKLTLKQELFANTPLANAALGTKESIQKIKLDDLKQQFAKVFELNKLVVVLGGDLKIDQTLKRLNNALNFLPQGKAYEEPYFETSDKKSEKVLYKDTEQAFVYFGAPFKIKDLKQDLAKSKVMMFVLGGGFGSRLMEKIRVQEGLAYSVYIRSNFSKVAHFASGYLQTKLSTQTKSVALVKKIVKEFIEKGMTQQELDDAKKFLLGSEPLRNETISSRLNTTYNYFYLGLPLNFNQTLLNQIQKMSLKEINDFIKAHTEINDLTFAIVSNKKKDK.

An N-terminal signal peptide occupies residues M1–A20.

This sequence belongs to the peptidase M16 family.

It localises to the secreted. Functionally, may contribute to the full activity of the protease PqqE. This chain is Non-peptidase homolog YmxG, found in Helicobacter pylori (strain ATCC 700392 / 26695) (Campylobacter pylori).